The primary structure comprises 116 residues: Diuretic hormone class 2 (116 aa).

A signal peptide spans 1–25 (MTNRCACFALAFLLFCLLAISSIEA). A propeptide spanning residues 26 to 75 (APMPSQSNGGYGGAGYNELEEVPDDLLMELMTRFGRTIIRARNDLENSKR) is cleaved from the precursor. The residue at position 106 (proline 106) is a Proline amide. A propeptide spanning residues 112–116 (SETDV) is cleaved from the precursor.

It localises to the secreted. Regulation of fluid secretion. Stimulates Malpighian tubules fluid secretion by activating the apical membrane V-ATPase via cyclic AMP of principal cells in the main secretory segment. The chain is Diuretic hormone class 2 (Dh31) from Drosophila melanogaster (Fruit fly).